Here is a 341-residue protein sequence, read N- to C-terminus: Probable GDP-mannose transporter 2 (341 aa).

Topologically, residues 1–11 (MSKHKHEWTES) are cytoplasmic. The helical transmembrane segment at 12-32 (VANSGPASILSYCASSILMTV) threads the bilayer. Residues 33–46 (TNKFVVNLDNFNMN) are Lumenal-facing. A helical transmembrane segment spans residues 47-67 (FVMLFVQSLVCTVTLCILRIV). Topologically, residues 68 to 85 (GVANFRSLNRTDVKNWFP) are cytoplasmic. The chain crosses the membrane as a helical span at residues 86–106 (ISLLLVLMIYTSLKSLQYLAV). Position 107 (proline 107) is a topological domain, lumenal. Residues 108 to 128 (IYTIFKNLTIILIAYGEVLFF) traverse the membrane as a helical segment. Over 129 to 139 (GGKVTSMELTS) the chain is Cytoplasmic. A helical transmembrane segment spans residues 140 to 160 (FIMMVLSSVVATWGDQQAIAI). Residues 161 to 176 (KASSLEDLDQELVEST) lie on the Lumenal side of the membrane. The helical transmembrane segment at 177–197 (IFVLNPGYLWMFTNCISSALF) threads the bilayer. Residues 198–214 (VLIMRKRIRLTNFKDYD) are Cytoplasmic-facing. A helical transmembrane segment spans residues 215–235 (TMFYNNVLALPLLLVFSFIME). Residues 236 to 251 (DWSTKNLSVNLSADSL) lie on the Lumenal side of the membrane. Asparagine 241 and asparagine 245 each carry an N-linked (GlcNAc...) asparagine glycan. The chain crosses the membrane as a helical span at residues 252-272 (AAMVISGLMSVGISYCSGWCV). Residues 273 to 278 (RVTSST) lie on the Cytoplasmic side of the membrane. A helical transmembrane segment spans residues 279–299 (TYSMVGALNKLPIALAGLVFF). Residues 300–303 (DAPK) lie on the Lumenal side of the membrane. The helical transmembrane segment at 304 to 324 (NFLSFFSIFLGFLSGLLYAVA) threads the bilayer. Topologically, residues 325 to 341 (KQKKIQQQKVLAATLEK) are cytoplasmic.

Belongs to the TPT transporter family. SLC35D subfamily.

The protein localises to the golgi apparatus membrane. It localises to the cytoplasmic vesicle membrane. Its subcellular location is the endoplasmic reticulum membrane. Involved in the import of GDP-mannose from the cytoplasm into the Golgi lumen. This chain is Probable GDP-mannose transporter 2 (HVG1), found in Saccharomyces cerevisiae (strain Lalvin EC1118 / Prise de mousse) (Baker's yeast).